The chain runs to 458 residues: Exodeoxyribonuclease 7 large subunit (458 aa).

This sequence belongs to the XseA family. In terms of assembly, heterooligomer composed of large and small subunits.

It is found in the cytoplasm. The catalysed reaction is Exonucleolytic cleavage in either 5'- to 3'- or 3'- to 5'-direction to yield nucleoside 5'-phosphates.. Its function is as follows. Bidirectionally degrades single-stranded DNA into large acid-insoluble oligonucleotides, which are then degraded further into small acid-soluble oligonucleotides. The protein is Exodeoxyribonuclease 7 large subunit of Escherichia coli (strain UTI89 / UPEC).